The primary structure comprises 291 residues: Potassium-transporting ATPase subunit beta (291 aa).

Residues 1 to 36 (MAALQEKKSCSQRMEEFRHYCWNPDTGQMLGRTLSR) are Cytoplasmic-facing. A helical; Signal-anchor for type II membrane protein membrane pass occupies residues 37-57 (WVWISLYYVAFYVVMTGLFAL). Over 58 to 291 (CIYVLMQTID…KVEFKLKIQK (234 aa)) the chain is Extracellular. N99, N103, N130, N146, and N161 each carry an N-linked (GlcNAc...) asparagine glycan. C131 and C152 are disulfide-bonded. The cysteines at positions 162 and 178 are disulfide-linked. N-linked (GlcNAc...) asparagine glycans are attached at residues N193 and N222. The tract at residues 194–291 (STPPRVDCTF…KVEFKLKIQK (98 aa)) is immunoglobulin-like. C201 and C263 form a disulfide bridge.

This sequence belongs to the X(+)/potassium ATPases subunit beta family. The ATPase pump is composed of two subunits: alpha (catalytic) and beta (regulatory). Interacts with alpha subunit ATP12A; this interaction is required for the formation of a functionally active pump and targeting at the plasma membrane. Interacts (via N-terminus) with alpha subunit ATP4A (via the P-domain). In terms of processing, N-glycosylation is necessary for assembly and functional expression of the pump at the plasma membrane.

Its subcellular location is the apical cell membrane. The protein resides in the cell membrane. Its function is as follows. The beta subunit of the gastric H(+)/K(+) ATPase pump which transports H(+) ions in exchange for K(+) ions across the apical membrane of parietal cells. Plays a structural and regulatory role in the assembly and membrane targeting of a functionally active pump. Within a transport cycle, the transfer of a H(+) ion across the membrane is coupled to ATP hydrolysis and is associated with a transient phosphorylation of the alpha subunit that shifts the pump conformation from inward-facing (E1) to outward-facing state (E2). Interacts with the phosphorylation domain of the alpha subunit and functions as a ratchet, stabilizing the lumenal-open E2 conformation and preventing the reverse reaction of the transport cycle. The chain is Potassium-transporting ATPase subunit beta (ATP4B) from Oryctolagus cuniculus (Rabbit).